The following is a 507-amino-acid chain: MFS transporter fsa7 (507 aa).

The tract at residues 1-65 (MATKDPAVTT…PDDPEHPLNW (65 aa)) is disordered. Asn64 carries an N-linked (GlcNAc...) asparagine glycan. A helical transmembrane segment spans residues 72 to 92 (LHLVIVSLFTLAANLAATMFA). N-linked (GlcNAc...) asparagine glycosylation occurs at Asn106. Helical transmembrane passes span 111 to 131 (AMTVSLYVLGFALGPLLLAPL), 146 to 166 (FVYIAFTIGCAFSTNVAMFLV), 169 to 189 (IICGCAASGPMSIGGGTVADL), 200 to 220 (ALFTVGPLLGPVIGPIIGGFV), and 228 to 248 (WTFRIILIFSGLIGVATVIFM). Asn252 is a glycosylation site (N-linked (GlcNAc...) asparagine). 6 helical membrane-spanning segments follow: residues 302 to 322 (PIVLLVSLYTGILFGLIFLLF), 341 to 361 (GLAYLGLGIGMILGLVLFSVL), 379 to 399 (LILMKWLGPVTPLGLFIYGWT), 406 to 426 (WIVPIIGTFVVGFGSLFVVIP), 429 to 449 (IYLVDSFGAEAAASAMAANLL), and 472 to 492 (GWGNSVLGFICLLFTPVPWFF).

Belongs to the major facilitator superfamily.

The protein resides in the cell membrane. Its function is as follows. Efflux pump that might be required for efficient secretion of fusarisetin A or other secondary metabolies produced by the fusarisetin A gene cluster. This chain is MFS transporter fsa7, found in Fusarium sp. (strain FN080326).